We begin with the raw amino-acid sequence, 353 residues long: Photosystem II D2 protein (353 aa).

An N-acetylthreonine modification is found at Thr2. At Thr2 the chain carries Phosphothreonine. Residues 41 to 61 traverse the membrane as a helical segment; it reads CAYFALGGWFTGTTFVTSWYT. Position 118 (His118) interacts with chlorophyll a. A helical transmembrane segment spans residues 125-141; it reads GFMLRQFELARSVQLRP. Residues Gln130 and Asn143 each coordinate pheophytin a. The chain crosses the membrane as a helical span at residues 153–166; the sequence is VFVSVFLIYPLGQS. Residue His198 coordinates chlorophyll a. Residues 208 to 228 form a helical membrane-spanning segment; the sequence is AALLCAIHGATVENTLFEDGD. 2 residues coordinate a plastoquinone: His215 and Phe262. His215 contacts Fe cation. A Fe cation-binding site is contributed by His269. A helical transmembrane segment spans residues 279–295; sequence GLWMSAIGVVGLALNLR.

It belongs to the reaction center PufL/M/PsbA/D family. In terms of assembly, PSII is composed of 1 copy each of membrane proteins PsbA, PsbB, PsbC, PsbD, PsbE, PsbF, PsbH, PsbI, PsbJ, PsbK, PsbL, PsbM, PsbT, PsbX, PsbY, PsbZ, Psb30/Ycf12, at least 3 peripheral proteins of the oxygen-evolving complex and a large number of cofactors. It forms dimeric complexes. The D1/D2 heterodimer binds P680, chlorophylls that are the primary electron donor of PSII, and subsequent electron acceptors. It shares a non-heme iron and each subunit binds pheophytin, quinone, additional chlorophylls, carotenoids and lipids. There is also a Cl(-1) ion associated with D1 and D2, which is required for oxygen evolution. The PSII complex binds additional chlorophylls, carotenoids and specific lipids. serves as cofactor.

It localises to the plastid. The protein localises to the chloroplast thylakoid membrane. The enzyme catalyses 2 a plastoquinone + 4 hnu + 2 H2O = 2 a plastoquinol + O2. Its function is as follows. Photosystem II (PSII) is a light-driven water:plastoquinone oxidoreductase that uses light energy to abstract electrons from H(2)O, generating O(2) and a proton gradient subsequently used for ATP formation. It consists of a core antenna complex that captures photons, and an electron transfer chain that converts photonic excitation into a charge separation. The D1/D2 (PsbA/PsbD) reaction center heterodimer binds P680, the primary electron donor of PSII as well as several subsequent electron acceptors. D2 is needed for assembly of a stable PSII complex. This chain is Photosystem II D2 protein, found in Oryza nivara (Indian wild rice).